Reading from the N-terminus, the 123-residue chain is Small ribosomal subunit protein uS12 (123 aa).

D89 is subject to 3-methylthioaspartic acid.

It belongs to the universal ribosomal protein uS12 family. As to quaternary structure, part of the 30S ribosomal subunit. Contacts proteins S8 and S17. May interact with IF1 in the 30S initiation complex.

In terms of biological role, with S4 and S5 plays an important role in translational accuracy. Functionally, interacts with and stabilizes bases of the 16S rRNA that are involved in tRNA selection in the A site and with the mRNA backbone. Located at the interface of the 30S and 50S subunits, it traverses the body of the 30S subunit contacting proteins on the other side and probably holding the rRNA structure together. The combined cluster of proteins S8, S12 and S17 appears to hold together the shoulder and platform of the 30S subunit. This is Small ribosomal subunit protein uS12 from Myxococcus xanthus.